Reading from the N-terminus, the 408-residue chain is Endo-1,4-beta-xylanase A (408 aa).

The first 19 residues, 1–19, serve as a signal peptide directing secretion; it reads MKLSASFAALALLLPFVQA. Residues 20–55 form the CBM1 domain; that stretch reads QSPVWGQCGGIGWTGPTTCTAGNVCQEYSAYYSQCI. A disordered region spans residues 64 to 89; it reads TSVSTAPNPPPTSHTSTSSAPSGAST. Residues 76-89 show a composition bias toward low complexity; the sequence is SHTSTSSAPSGAST. The GH10 domain occupies 88-405; sequence STSTAKLNTL…KPAYDGIAIG (318 aa). Glu222 acts as the Proton donor in catalysis. Glu327 functions as the Nucleophile in the catalytic mechanism. Cysteines 355 and 361 form a disulfide.

It belongs to the glycosyl hydrolase 10 (cellulase F) family.

The protein localises to the secreted. The enzyme catalyses Endohydrolysis of (1-&gt;4)-beta-D-xylosidic linkages in xylans.. It participates in glycan degradation; xylan degradation. Functionally, endo-1,4-beta-xylanase involved in the hydrolysis of xylan, a major structural heterogeneous polysaccharide found in plant biomass representing the second most abundant polysaccharide in the biosphere, after cellulose. This Phanerodontia chrysosporium (White-rot fungus) protein is Endo-1,4-beta-xylanase A (xynA).